A 406-amino-acid chain; its full sequence is uncharacterized protein (406 aa).

It to S.pombe SpAC12C2.04.

The protein localises to the cytoplasm. Its subcellular location is the nucleus. This is an uncharacterized protein from Schizosaccharomyces pombe (strain 972 / ATCC 24843) (Fission yeast).